The sequence spans 603 residues: Prostaglandin G/H synthase 1 (603 aa).

The N-terminal stretch at 1–27 (MSRGSRLHRWPLLLLLLLLLPPPPVLP) is a signal peptide. The EGF-like domain maps to 35-73 (PVNPCCYYPCQHQGICVRFGLDRYQCDCTRTGYSGPNCT). 4 disulfides stabilise this stretch: cysteine 39–cysteine 50, cysteine 40–cysteine 162, cysteine 44–cysteine 60, and cysteine 62–cysteine 72. N-linked (GlcNAc...) asparagine glycans are attached at residues asparagine 71, asparagine 107, and asparagine 147. Catalysis depends on histidine 210, which acts as the Proton acceptor. The For cyclooxygenase activity role is filled by tyrosine 388. Histidine 391 is a binding site for heme b. Residues cysteine 572 and cysteine 578 are joined by a disulfide bond.

Belongs to the prostaglandin G/H synthase family. As to quaternary structure, homodimer. The cofactor is heme b. N-glycosylated. N-linked glycosylation is necessary for enzymatic activity. As to expression, brain cortex. Isoform 2 is expressed in the cerebral cortex and heart.

Its subcellular location is the microsome membrane. It localises to the endoplasmic reticulum membrane. The catalysed reaction is (5Z,8Z,11Z,14Z)-eicosatetraenoate + AH2 + 2 O2 = prostaglandin H2 + A + H2O. The enzyme catalyses (5Z,8Z,11Z,14Z)-eicosatetraenoate + 2 O2 = prostaglandin G2. It carries out the reaction prostaglandin G2 + AH2 = prostaglandin H2 + A + H2O. It catalyses the reaction (9Z,12Z)-octadecadienoate + AH2 + O2 = (9R)-hydroxy-(10E,12Z)-octadecadienoate + A + H2O. The catalysed reaction is (9Z,12Z)-octadecadienoate + AH2 + O2 = (9S)-hydroxy-(10E,12Z)-octadecadienoate + A + H2O. The enzyme catalyses (9Z,12Z)-octadecadienoate + AH2 + O2 = (13S)-hydroxy-(9Z,11E)-octadecadienoate + A + H2O. It carries out the reaction (9Z,12Z)-octadecadienoate + AH2 + O2 = (13R)-hydroxy-(9Z,11E)-octadecadienoate + A + H2O. It participates in lipid metabolism; prostaglandin biosynthesis. The cyclooxygenase activity is inhibited by nonsteroidal anti-inflammatory drugs (NSAIDs) including ibuprofen, flurbiprofen, ketoprofen, naproxen, flurbiprofen, anirolac, fenclofenac and diclofenac. In terms of biological role, dual cyclooxygenase and peroxidase that plays an important role in the biosynthesis pathway of prostanoids, a class of C20 oxylipins mainly derived from arachidonate ((5Z,8Z,11Z,14Z)-eicosatetraenoate, AA, C20:4(n-6)), with a particular role in the inflammatory response. The cyclooxygenase activity oxygenates AA to the hydroperoxy endoperoxide prostaglandin G2 (PGG2), and the peroxidase activity reduces PGG2 to the hydroxy endoperoxide prostaglandin H2 (PGH2), the precursor of all 2-series prostaglandins and thromboxanes. This complex transformation is initiated by abstraction of hydrogen at carbon 13 (with S-stereochemistry), followed by insertion of molecular O2 to form the endoperoxide bridge between carbon 9 and 11 that defines prostaglandins. The insertion of a second molecule of O2 (bis-oxygenase activity) yields a hydroperoxy group in PGG2 that is then reduced to PGH2 by two electrons. Involved in the constitutive production of prostanoids in particular in the stomach and platelets. In gastric epithelial cells, it is a key step in the generation of prostaglandins, such as prostaglandin E2 (PGE2), which plays an important role in cytoprotection. In platelets, it is involved in the generation of thromboxane A2 (TXA2), which promotes platelet activation and aggregation, vasoconstriction and proliferation of vascular smooth muscle cells. Can also use linoleate (LA, (9Z,12Z)-octadecadienoate, C18:2(n-6)) as substrate and produce hydroxyoctadecadienoates (HODEs) in a regio- and stereospecific manner, being (9R)-HODE ((9R)-hydroxy-(10E,12Z)-octadecadienoate) and (13S)-HODE ((13S)-hydroxy-(9Z,11E)-octadecadienoate) its major products. In Canis lupus familiaris (Dog), this protein is Prostaglandin G/H synthase 1 (PTGS1).